The chain runs to 718 residues: MSRGYPENNNFLNNNNQMVLDMILYPLIGIPQTINWETVARLVPGLTPKECVKRFDELKSCGSSPVDNQYNPLMATGEGPVETLATYIKSSLLDTQGDFQETPVDQDTVSKAGRHSIATTRNCSSESENCTARNAGEETGESEGPNMVIHVCDEAKSLKEDFICPRDLLISEMKYFAEYLSMDAQRWEEVDISVHCDVHIFNWLIKYVKRNTKESKDCEIPALEPGNVISILISSEFLKMDSLVEQCIQYCHKNMNAIVAAPCNMNCINANLLTRIADLFTHNEIDDLKDKKDKFRSKLFCKKIERLFDPEYSNPDSRNNAATLYRCCLCKKLLTRETERRIPCIPGKINVDRHGNIIYIHIRDKTWDVHEYLNSLFEELKSWRDVYWRLWGTVNWLTCSRCYQAFLCIEFSHCQYHSEVVVYSSTVNSLNTVGTGIYPCCNQKVLRFDPTQLTKGCKVRDHMVVLHDQGENDDSPSCPPAKILDDLHKHKDVIAVPFLKDAVSDPGVGSCDEKGLEYEILLEPNTPWGSKTGELNAFLSLKNWTLQLKQQSLFSEEEEYTTGSEVTEDEVGDEEEIAKKQRKKEKPKKFTKPPKKQLSSPCSQKKEKTLEKSTSRDVSPFVVSMQKNKWDASRSLRFNQDAQREDDQRRMSEITGHLIKMRLGDLDRVKAKESKEFAGGIYSRLEAQVRASVPVTARQNSSDKNQRSKSRFGQGRPA.

An SANT domain is found at 21 to 59; that stretch reads DMILYPLIGIPQTINWETVARLVPGLTPKECVKRFDELK. The BTB domain maps to 147–255; sequence MVIHVCDEAK…QCIQYCHKNM (109 aa). Residues 555–576 show a composition bias toward acidic residues; sequence SEEEEYTTGSEVTEDEVGDEEE. 2 disordered regions span residues 555 to 622 and 690 to 718; these read SEEE…SPFV and RASVPVTARQNSSDKNQRSKSRFGQGRPA. A compositionally biased stretch (basic residues) spans 580–595; sequence KQRKKEKPKKFTKPPK. Positions 604 to 615 are enriched in basic and acidic residues; the sequence is QKKEKTLEKSTS.

This sequence belongs to the KIAA1841 family. As to quaternary structure, homodimer. Interacts (via the BTB domain) with HDAC1 and NCOR2.

Negatively regulates class switch recombination or isotype switching in splenic B-cells. The polypeptide is SANT and BTB domain regulator of class switch recombination (Mus musculus (Mouse)).